Reading from the N-terminus, the 380-residue chain is Probable protein phosphatase 2C 2 (380 aa).

Residues 69 to 339 (RSGSFADIGP…DNLTVIVICF (271 aa)) form the PPM-type phosphatase domain. Positions 113, 114, 287, and 330 each coordinate Mn(2+).

The protein belongs to the PP2C family. It depends on Mg(2+) as a cofactor. The cofactor is Mn(2+).

It carries out the reaction O-phospho-L-seryl-[protein] + H2O = L-seryl-[protein] + phosphate. The enzyme catalyses O-phospho-L-threonyl-[protein] + H2O = L-threonyl-[protein] + phosphate. This chain is Probable protein phosphatase 2C 2, found in Oryza sativa subsp. japonica (Rice).